Reading from the N-terminus, the 380-residue chain is 8-amino-7-oxononanoate synthase (380 aa).

R26 serves as a coordination point for substrate. 104 to 105 (GY) serves as a coordination point for pyridoxal 5'-phosphate. Residue H129 coordinates substrate. Pyridoxal 5'-phosphate-binding positions include S175, 200–203 (DEAH), and 232–235 (TLSK). K235 carries the post-translational modification N6-(pyridoxal phosphate)lysine. T345 lines the substrate pocket.

It belongs to the class-II pyridoxal-phosphate-dependent aminotransferase family. BioF subfamily. In terms of assembly, homodimer. Requires pyridoxal 5'-phosphate as cofactor.

The catalysed reaction is 6-carboxyhexanoyl-[ACP] + L-alanine + H(+) = (8S)-8-amino-7-oxononanoate + holo-[ACP] + CO2. It functions in the pathway cofactor biosynthesis; biotin biosynthesis. Catalyzes the decarboxylative condensation of pimeloyl-[acyl-carrier protein] and L-alanine to produce 8-amino-7-oxononanoate (AON), [acyl-carrier protein], and carbon dioxide. This Mycolicibacterium vanbaalenii (strain DSM 7251 / JCM 13017 / BCRC 16820 / KCTC 9966 / NRRL B-24157 / PYR-1) (Mycobacterium vanbaalenii) protein is 8-amino-7-oxononanoate synthase.